We begin with the raw amino-acid sequence, 353 residues long: Photosystem II protein D1 (353 aa).

Residue T2 is modified to N-acetylthreonine. Residue T2 is modified to Phosphothreonine. 3 consecutive transmembrane segments (helical) span residues 29-46 (YIGW…TATS), 118-133 (HFLL…EWEL), and 142-156 (WIAV…AATA). Position 118 (H118) interacts with chlorophyll a. Pheophytin a is bound at residue Y126. D170 and E189 together coordinate [CaMn4O5] cluster. The helical transmembrane segment at 197–218 (FHMLGVAGVFGGSLFSAMHGSL) threads the bilayer. H198 is a binding site for chlorophyll a. A quinone contacts are provided by residues H215 and 264–265 (SF). Residue H215 participates in Fe cation binding. H272 provides a ligand contact to Fe cation. The helical transmembrane segment at 274–288 (FLAAWPVVGIWFTAL) threads the bilayer. The [CaMn4O5] cluster site is built by H332, E333, D342, and A344. Positions 345–353 (AVEAPSTNG) are excised as a propeptide.

It belongs to the reaction center PufL/M/PsbA/D family. In terms of assembly, PSII is composed of 1 copy each of membrane proteins PsbA, PsbB, PsbC, PsbD, PsbE, PsbF, PsbH, PsbI, PsbJ, PsbK, PsbL, PsbM, PsbT, PsbX, PsbY, PsbZ, Psb30/Ycf12, at least 3 peripheral proteins of the oxygen-evolving complex and a large number of cofactors. It forms dimeric complexes. Requires The D1/D2 heterodimer binds P680, chlorophylls that are the primary electron donor of PSII, and subsequent electron acceptors. It shares a non-heme iron and each subunit binds pheophytin, quinone, additional chlorophylls, carotenoids and lipids. D1 provides most of the ligands for the Mn4-Ca-O5 cluster of the oxygen-evolving complex (OEC). There is also a Cl(-1) ion associated with D1 and D2, which is required for oxygen evolution. The PSII complex binds additional chlorophylls, carotenoids and specific lipids. as cofactor. Post-translationally, tyr-161 forms a radical intermediate that is referred to as redox-active TyrZ, YZ or Y-Z. C-terminally processed by CTPA; processing is essential to allow assembly of the oxygen-evolving complex and thus photosynthetic growth.

It localises to the plastid. The protein localises to the chloroplast thylakoid membrane. It catalyses the reaction 2 a plastoquinone + 4 hnu + 2 H2O = 2 a plastoquinol + O2. Photosystem II (PSII) is a light-driven water:plastoquinone oxidoreductase that uses light energy to abstract electrons from H(2)O, generating O(2) and a proton gradient subsequently used for ATP formation. It consists of a core antenna complex that captures photons, and an electron transfer chain that converts photonic excitation into a charge separation. The D1/D2 (PsbA/PsbD) reaction center heterodimer binds P680, the primary electron donor of PSII as well as several subsequent electron acceptors. The sequence is that of Photosystem II protein D1 from Lepidium virginicum (Virginia pepperweed).